We begin with the raw amino-acid sequence, 430 residues long: Tol-Pal system protein TolB (430 aa).

The N-terminal stretch at 1–21 (MKQAFRVALGFLVLWASVLHA) is a signal peptide.

The protein belongs to the TolB family. As to quaternary structure, the Tol-Pal system is composed of five core proteins: the inner membrane proteins TolA, TolQ and TolR, the periplasmic protein TolB and the outer membrane protein Pal. They form a network linking the inner and outer membranes and the peptidoglycan layer.

It is found in the periplasm. Its function is as follows. Part of the Tol-Pal system, which plays a role in outer membrane invagination during cell division and is important for maintaining outer membrane integrity. TolB occupies a key intermediary position in the Tol-Pal system because it communicates directly with both membrane-embedded components, Pal in the outer membrane and TolA in the inner membrane. This chain is Tol-Pal system protein TolB, found in Yersinia enterocolitica serotype O:8 / biotype 1B (strain NCTC 13174 / 8081).